The chain runs to 495 residues: Catalase B (495 aa).

The disordered stretch occupies residues 1–25 (MSNNKKLTSLFGAPVSDRENSMTAG). Residues His55 and Asn128 contribute to the active site. Tyr338 contributes to the heme binding site.

This sequence belongs to the catalase family. In terms of assembly, homodimer. The cofactor is heme.

It catalyses the reaction 2 H2O2 = O2 + 2 H2O. In terms of biological role, decomposes hydrogen peroxide into water and oxygen; serves to protect cells from the toxic effects of hydrogen peroxide. The protein is Catalase B (katB) of Staphylococcus xylosus.